The chain runs to 391 residues: Terminal nucleotidyltransferase 5C (391 aa).

The protein belongs to the TENT family. As to quaternary structure, interacts with BCCIP and PABPC1; the interaction has no effect on TENT5C poly(A) polymerase function. Interacts with PLK4; this interaction leads to the TENT5C recruitment into the centrosome.

It localises to the nucleus. Its subcellular location is the cytoplasm. The protein resides in the cytoskeleton. The protein localises to the microtubule organizing center. It is found in the centrosome. It carries out the reaction RNA(n) + ATP = RNA(n)-3'-adenine ribonucleotide + diphosphate. Functionally, catalyzes the transfer of one adenosine molecule from an ATP to an mRNA poly(A) tail bearing a 3'-OH terminal group and enhances mRNA stability and gene expression. Can also elongate RNA oligos ending with uridine molecule, provided that the sequence is adenosine-rich. Mainly targets mRNAs encoding endoplasmic reticulum-targeted protein. (Microbial infection) Seems to enhance replication of some viruses, including yellow fever virus, in response to type I interferon. The protein is Terminal nucleotidyltransferase 5C of Homo sapiens (Human).